A 223-amino-acid chain; its full sequence is Transmembrane protein 126 (223 aa).

Topologically, residues 1 to 39 (MALSRAKPDELPRDAVVITEDQALKYQWKIITSWDKIGE) are mitochondrial matrix. A helical transmembrane segment spans residues 40 to 62 (VWSLRYTPGILSALAAGTGAYIN). Over 63 to 78 (NHYRTKLRLGGHGRLS) the chain is Mitochondrial intermembrane. Residues 79–99 (TYLPIVAVPAIFTMLAHKFFI) form a helical membrane-spanning segment. Residues 100 to 123 (QRPILLNPLGECPVCIQMRSAAFQ) lie on the Mitochondrial matrix side of the membrane. Residues 124-144 (TSLGIVYPTILAPFAAFLFAT) traverse the membrane as a helical segment. Residues 145 to 171 (RCYTYRIPSITENPREVFLLWRKFTRP) lie on the Mitochondrial intermembrane side of the membrane. A helical transmembrane segment spans residues 172–192 (IVPALGTLIGLQALLTMFLTG). The Mitochondrial matrix portion of the chain corresponds to 193–223 (QEDKQNFKLMLRMREIEHQVEEEHLPQRMDF).

The protein belongs to the TMEM126 family. As to quaternary structure, associates with mitochondrial complex I assembly intermediates during its biogenesis.

It localises to the mitochondrion membrane. In terms of biological role, as part of the MCIA complex, involved in the assembly of the mitochondrial complex I. This is Transmembrane protein 126 from Drosophila melanogaster (Fruit fly).